The primary structure comprises 561 residues: Asparagine synthetase [glutamine-hydrolyzing] (561 aa).

Cys2 (for GATase activity) is an active-site residue. The Glutamine amidotransferase type-2 domain maps to 2–191 (CGIWALFGSD…PGHYEVLDLK (190 aa)). L-glutamine-binding positions include 49–53 (RLAVV), 75–77 (NGE), and Asp97. The 324-residue stretch at 213 to 536 (HAIYDSVEKL…PGRADWLTHY (324 aa)) folds into the Asparagine synthetase domain. ATP-binding positions include Leu256, Ile288, and 363 to 364 (SG). N6-acetyllysine is present on Lys385. Thr545 is modified (phosphothreonine). Ser557 carries the post-translational modification Phosphoserine.

It catalyses the reaction L-aspartate + L-glutamine + ATP + H2O = L-asparagine + L-glutamate + AMP + diphosphate + H(+). Its pathway is amino-acid biosynthesis; L-asparagine biosynthesis; L-asparagine from L-aspartate (L-Gln route): step 1/1. The chain is Asparagine synthetase [glutamine-hydrolyzing] (Asns) from Mus musculus (Mouse).